Reading from the N-terminus, the 453-residue chain is Na(+)/H(+) antiporter NhaA 2 (453 aa).

11 helical membrane-spanning segments follow: residues 32–52 (GALLLAGAVIALIWANSPGAA), 71–91 (LSLAAWAKDGLLAVFFFVAGL), 109–129 (AVPIAAAVGGVLAPAAVYVLI), 140–160 (GWAIPAATDIAFALAVLAVIG), 169–189 (VFLLTLAVVDDLIAIMIIAVF), 193–213 (NLSVTPLLATALPLVAFAILL), 232–252 (ALVHASGVHATVAGVLLALVV), 284–304 (AVPVFALMSAGVAIGGLGGLV), 310–330 (PVAIGVIAGLVIGKPLGVIAV), 356–376 (MLAGIGFTVSLLIGELSFAAG), and 382–402 (HVKIAIVTGSLIAAVLAAVIL). The tract at residues 409–453 (GSRGNDATTRDPDQTRVGTATQRTTPDHPTPAATDANQPARSPAP) is disordered.

The protein belongs to the NhaA Na(+)/H(+) (TC 2.A.33) antiporter family.

It is found in the cell membrane. The catalysed reaction is Na(+)(in) + 2 H(+)(out) = Na(+)(out) + 2 H(+)(in). Its function is as follows. Na(+)/H(+) antiporter that extrudes sodium in exchange for external protons. In Salinispora tropica (strain ATCC BAA-916 / DSM 44818 / JCM 13857 / NBRC 105044 / CNB-440), this protein is Na(+)/H(+) antiporter NhaA 2.